The chain runs to 351 residues: Secreted frizzled-related sequence protein 4 (351 aa).

A signal peptide spans 1-18; sequence MLRSILVALCLWLRLALG. One can recognise an FZ domain in the interval 19-139; the sequence is VRGAPCEAVR…VYDRGVCISP (121 aa). 5 disulfide bridges follow: C24–C85, C32–C78, C69–C108, C97–C136, and C101–C125. Residues N38 and N68 are each glycosylated (N-linked (GlcNAc...) asparagine). 3 N-linked (GlcNAc...) asparagine glycosylation sites follow: N116, N194, and N240. The region spanning 178–306 is the NTR domain; that stretch reads CKCKKVKPTL…TIQDKKQIAS (129 aa). Positions 293–303 are enriched in basic and acidic residues; the sequence is EQQRTIQDKKQ. The tract at residues 293-351 is disordered; that stretch reads EQQRTIQDKKQIASRTSRTSRSNPPKSKGRPPAPKPASPKKNIKARSAPKKSNLKKSAS. The segment covering 306–318 has biased composition (low complexity); the sequence is SRTSRTSRSNPPK. The span at 333-351 shows a compositional bias: basic residues; sequence KNIKARSAPKKSNLKKSAS.

It belongs to the secreted frizzled-related protein (sFRP) family. Expressed in the ovary. Localized to granulosa cells of periovulatory follicles and corpora lutea. Weakly expressed in adult tissues including kidney, brain and lung.

The protein resides in the secreted. Soluble frizzled-related proteins (sFRPS) function as modulators of Wnt signaling through direct interaction with Wnts. They have a role in regulating cell growth and differentiation in specific cell types. SFRP4 plays a role in bone morphogenesis. May also act as a regulator of adult uterine morphology and function. May also increase apoptosis during ovulation possibly through modulation of FZ1/FZ4/WNT4 signaling. Has phosphaturic effects by specifically inhibiting sodium-dependent phosphate uptake. The chain is Secreted frizzled-related sequence protein 4 (Sfrp4) from Mus musculus (Mouse).